We begin with the raw amino-acid sequence, 200 residues long: ATP-dependent Clp protease proteolytic subunit (200 aa).

Ser98 serves as the catalytic Nucleophile. His123 is an active-site residue.

Belongs to the peptidase S14 family. In terms of assembly, fourteen ClpP subunits assemble into 2 heptameric rings which stack back to back to give a disk-like structure with a central cavity, resembling the structure of eukaryotic proteasomes.

The protein resides in the cytoplasm. It carries out the reaction Hydrolysis of proteins to small peptides in the presence of ATP and magnesium. alpha-casein is the usual test substrate. In the absence of ATP, only oligopeptides shorter than five residues are hydrolyzed (such as succinyl-Leu-Tyr-|-NHMec, and Leu-Tyr-Leu-|-Tyr-Trp, in which cleavage of the -Tyr-|-Leu- and -Tyr-|-Trp bonds also occurs).. Its function is as follows. Cleaves peptides in various proteins in a process that requires ATP hydrolysis. Has a chymotrypsin-like activity. Plays a major role in the degradation of misfolded proteins. This Deinococcus geothermalis (strain DSM 11300 / CIP 105573 / AG-3a) protein is ATP-dependent Clp protease proteolytic subunit.